The sequence spans 38 residues: Zinc-containing ferredoxin (38 aa).

Residues 1–11 (GIDPNFRTSRP) show a composition bias toward polar residues. Residues 1-38 (GIDPNFRTSRPVTGDHAGHKVYAPADPPVKEKALGIHG) are disordered. The segment at 1 to 38 (GIDPNFRTSRPVTGDHAGHKVYAPADPPVKEKALGIHG) is N-terminal extension. Zn(2+) is bound by residues H16 and H19. Residues 28–38 (PVKEKALGIHG) show a composition bias toward basic and acidic residues. K30 bears the N6-methyllysine mark. Position 37 (H37) interacts with Zn(2+).

It depends on [3Fe-4S] cluster as a cofactor. [4Fe-4S] cluster is required as a cofactor. Requires Zn(2+) as cofactor.

Functionally, ferredoxins are iron-sulfur proteins that transfer electrons in a wide variety of metabolic reactions. This is Zinc-containing ferredoxin (zfx) from Metallosphaera prunae.